The primary structure comprises 399 residues: Pyridinium-3,5-bisthiocarboxylic acid mononucleotide nickel insertion protein (399 aa).

It belongs to the LarC family.

The catalysed reaction is Ni(II)-pyridinium-3,5-bisthiocarboxylate mononucleotide = pyridinium-3,5-bisthiocarboxylate mononucleotide + Ni(2+). In terms of biological role, involved in the biosynthesis of a nickel-pincer cofactor ((SCS)Ni(II) pincer complex). Binds Ni(2+), and functions in nickel delivery to pyridinium-3,5-bisthiocarboxylic acid mononucleotide (P2TMN), to form the mature cofactor. Is thus probably required for the activation of nickel-pincer cofactor-dependent enzymes. The sequence is that of Pyridinium-3,5-bisthiocarboxylic acid mononucleotide nickel insertion protein from Clostridium kluyveri (strain ATCC 8527 / DSM 555 / NBRC 12016 / NCIMB 10680 / K1).